The chain runs to 147 residues: MVHWSAEEKQLITSVWSKVNVEECGAEALARLLIVYPWTQRFFDNFGNLSSPTAIIGNPKVRAHGKKVLSSFGEAVKNLDNIKNTYAKLSELHCEKLHVDPENFRLLGNILIIVLAAHFTKDFTPTCQAVWQKLVSVVAHALAYKYH.

One can recognise a Globin domain in the interval 3 to 147 (HWSAEEKQLI…VAHALAYKYH (145 aa)). Heme b-binding residues include histidine 64 and histidine 93.

This sequence belongs to the globin family.

Its function is as follows. The rho chain is the major early embryonic beta-type hemoglobin chain. The sequence is that of Hemoglobin subunit rho from Gallus gallus (Chicken).